The following is a 452-amino-acid chain: Cobyrinate a,c-diamide synthase (452 aa).

A GATase cobBQ-type domain is found at 248-441; it reads RVAYALDAAF…LHIHFYQNLL (194 aa). The active-site Nucleophile is the C330.

The protein belongs to the CobB/CbiA family. It depends on Mg(2+) as a cofactor.

The catalysed reaction is cob(II)yrinate + 2 L-glutamine + 2 ATP + 2 H2O = cob(II)yrinate a,c diamide + 2 L-glutamate + 2 ADP + 2 phosphate + 2 H(+). The protein operates within cofactor biosynthesis; adenosylcobalamin biosynthesis; cob(II)yrinate a,c-diamide from sirohydrochlorin (anaerobic route): step 10/10. Its function is as follows. Catalyzes the ATP-dependent amidation of the two carboxylate groups at positions a and c of cobyrinate, using either L-glutamine or ammonia as the nitrogen source. This is Cobyrinate a,c-diamide synthase from Listeria monocytogenes serotype 4b (strain F2365).